A 72-amino-acid polypeptide reads, in one-letter code: Protein SlyX (72 aa).

This sequence belongs to the SlyX family.

The sequence is that of Protein SlyX from Cronobacter sakazakii (strain ATCC BAA-894) (Enterobacter sakazakii).